Reading from the N-terminus, the 921-residue chain is Isoleucine--tRNA ligase (921 aa).

Positions 57 to 67 (PYANGDIHMGH) match the 'HIGH' region motif. Glu-552 is an L-isoleucyl-5'-AMP binding site. The 'KMSKS' region motif lies at 593-597 (KMSKS). Lys-596 is a binding site for ATP. 4 residues coordinate Zn(2+): Cys-888, Cys-891, Cys-908, and Cys-911.

The protein belongs to the class-I aminoacyl-tRNA synthetase family. IleS type 1 subfamily. In terms of assembly, monomer. Zn(2+) serves as cofactor.

It localises to the cytoplasm. The enzyme catalyses tRNA(Ile) + L-isoleucine + ATP = L-isoleucyl-tRNA(Ile) + AMP + diphosphate. Functionally, catalyzes the attachment of isoleucine to tRNA(Ile). As IleRS can inadvertently accommodate and process structurally similar amino acids such as valine, to avoid such errors it has two additional distinct tRNA(Ile)-dependent editing activities. One activity is designated as 'pretransfer' editing and involves the hydrolysis of activated Val-AMP. The other activity is designated 'posttransfer' editing and involves deacylation of mischarged Val-tRNA(Ile). The sequence is that of Isoleucine--tRNA ligase from Bacillus anthracis (strain A0248).